The chain runs to 499 residues: Pyruvate kinase 1 (499 aa).

Arg-50 lines the substrate pocket. K(+) contacts are provided by Asn-52, Ser-54, Asp-84, and Thr-85. 52–55 (NFSH) serves as a coordination point for ATP. Residue Arg-91 participates in ATP binding. Glu-241 contacts Mg(2+). Substrate is bound by residues Gly-264, Asp-265, and Thr-297. Asp-265 is a binding site for Mg(2+).

It belongs to the pyruvate kinase family. As to quaternary structure, homotetramer. It depends on Mg(2+) as a cofactor. The cofactor is K(+).

It catalyses the reaction pyruvate + ATP = phosphoenolpyruvate + ADP + H(+). Its pathway is carbohydrate degradation; glycolysis; pyruvate from D-glyceraldehyde 3-phosphate: step 5/5. Activated by fructose 2,6-bisphosphate, activated by the effector in a cooperative manner. This is Pyruvate kinase 1 (PYK1) from Trypanosoma brucei brucei.